The sequence spans 543 residues: NXPE family member 4 (543 aa).

A signal peptide spans 1-26; it reads MKTLASRKSLWMLLFIVIFWVSFTVF. Residues N91, N159, and N223 are each glycosylated (N-linked (GlcNAc...) asparagine).

This sequence belongs to the NXPE family.

It is found in the secreted. The chain is NXPE family member 4 (Nxpe4) from Mus musculus (Mouse).